We begin with the raw amino-acid sequence, 691 residues long: Threonine--tRNA ligase (691 aa).

The disordered stretch occupies residues 1–22 (MSVPAQPAPGADGGDPRQPIRV). Positions 1–73 (MSVPAQPAPG…DADAEVTPIA (73 aa)) constitute a TGS domain. The tract at residues 268-574 (DHRKLGVELD…LTEHYAGAFP (307 aa)) is catalytic. The Zn(2+) site is built by cysteine 373, histidine 424, and histidine 551.

It belongs to the class-II aminoacyl-tRNA synthetase family. In terms of assembly, homodimer. It depends on Zn(2+) as a cofactor.

Its subcellular location is the cytoplasm. It carries out the reaction tRNA(Thr) + L-threonine + ATP = L-threonyl-tRNA(Thr) + AMP + diphosphate + H(+). Catalyzes the attachment of threonine to tRNA(Thr) in a two-step reaction: L-threonine is first activated by ATP to form Thr-AMP and then transferred to the acceptor end of tRNA(Thr). Also edits incorrectly charged L-seryl-tRNA(Thr). In Mycobacterium ulcerans (strain Agy99), this protein is Threonine--tRNA ligase.